Consider the following 524-residue polypeptide: M phase phosphoprotein 10 (524 aa).

Positions 85-92 (VKRFAKNP) match the Nuclear localization signal 1 motif. Disordered regions lie at residues 100-243 (KLAL…KLGK) and 259-283 (KLKD…STHE). Positions 109-168 (DDIDEMDMDGFDSDDVDDEDKEIESNDSEGEDEEEEEEDEEEEEEEEEEEEEEKDGDNEG) are enriched in acidic residues. A coiled-coil region spans residues 131 to 165 (IESNDSEGEDEEEEEEDEEEEEEEEEEEEEEKDGD). A compositionally biased stretch (basic and acidic residues) spans 169 to 180 (IEDKFFKIKELE). Over residues 181–191 (EFLEEGEAEEY) the composition is skewed to acidic residues. Over residues 196 to 207 (KNKKGVAQRKKQ) the composition is skewed to basic residues. The segment covering 210–238 (SDDEDEEDDDDEEEDVEFDAFAGGDDEET) has biased composition (acidic residues). Residues 257–302 (KMKLKDLSEDEEAEIENKGNEKLSTHERARLKLQSKIEQMEKANLD) adopt a coiled-coil conformation. Residues 271-283 (IENKGNEKLSTHE) show a composition bias toward basic and acidic residues. A Nuclear localization signal 2 motif is present at residues 373–380 (GKREAKEL). The disordered stretch occupies residues 479-524 (KGDIKDESELTQEDRKRRRANKKRKFKAESANEPPKKALDTSTKNP). Positions 480 to 493 (GDIKDESELTQEDR) are enriched in basic and acidic residues. Residues 494–504 (KRRRANKKRKF) are compositionally biased toward basic residues. The span at 505–517 (KAESANEPPKKAL) shows a compositional bias: basic and acidic residues.

The protein belongs to the MPP10 family. In terms of assembly, component of the ribosomal small subunit (SSU) processome. Interacts with THAL in the nucleus.

The protein resides in the nucleus. It localises to the nucleolus. In terms of biological role, involved in nucleolar processing of pre-18S ribosomal RNA. This Arabidopsis thaliana (Mouse-ear cress) protein is M phase phosphoprotein 10.